We begin with the raw amino-acid sequence, 476 residues long: Ribulose bisphosphate carboxylase large chain (476 aa).

Residues N124 and T174 each contribute to the substrate site. The active-site Proton acceptor is the K176. K178 serves as a coordination point for substrate. Mg(2+) is bound by residues K202, D204, and E205. K202 is modified (N6-carboxylysine). H295 (proton acceptor) is an active-site residue. Substrate contacts are provided by R296, H328, and S380.

Belongs to the RuBisCO large chain family. Type I subfamily. In terms of assembly, heterohexadecamer of 8 large chains and 8 small chains; disulfide-linked. The disulfide link is formed within the large subunit homodimers. The cofactor is Mg(2+). Post-translationally, the disulfide bond which can form in the large chain dimeric partners within the hexadecamer appears to be associated with oxidative stress and protein turnover.

It is found in the carboxysome. It carries out the reaction 2 (2R)-3-phosphoglycerate + 2 H(+) = D-ribulose 1,5-bisphosphate + CO2 + H2O. The catalysed reaction is D-ribulose 1,5-bisphosphate + O2 = 2-phosphoglycolate + (2R)-3-phosphoglycerate + 2 H(+). Its function is as follows. RuBisCO catalyzes two reactions: the carboxylation of D-ribulose 1,5-bisphosphate, the primary event in carbon dioxide fixation, as well as the oxidative fragmentation of the pentose substrate in the photorespiration process. Both reactions occur simultaneously and in competition at the same active site. The sequence is that of Ribulose bisphosphate carboxylase large chain from Trichormus variabilis (strain ATCC 29413 / PCC 7937) (Anabaena variabilis).